Consider the following 243-residue polypeptide: Ribonuclease PH (243 aa).

Residues Arg91 and 129–131 contribute to the phosphate site; that span reads GTR.

The protein belongs to the RNase PH family. As to quaternary structure, homohexameric ring arranged as a trimer of dimers.

The enzyme catalyses tRNA(n+1) + phosphate = tRNA(n) + a ribonucleoside 5'-diphosphate. Phosphorolytic 3'-5' exoribonuclease that plays an important role in tRNA 3'-end maturation. Removes nucleotide residues following the 3'-CCA terminus of tRNAs; can also add nucleotides to the ends of RNA molecules by using nucleoside diphosphates as substrates, but this may not be physiologically important. Probably plays a role in initiation of 16S rRNA degradation (leading to ribosome degradation) during starvation. The polypeptide is Ribonuclease PH (Burkholderia mallei (strain NCTC 10247)).